Reading from the N-terminus, the 433-residue chain is Zinc finger and SCAN domain-containing protein 4 (433 aa).

The region spanning 44–126 is the SCAN box domain; it reads RMVLNSFQDS…RFIEDLTDDS (83 aa). Polar residues-rich tracts occupy residues 165–185, 195–210, and 277–299; these read TTRE…SLET, GWNS…ENIT, and QPEQ…STCE. 2 disordered regions span residues 165–210 and 275–301; these read TTRE…ENIT and ISQP…CEVH. 4 C2H2-type zinc fingers span residues 312–334, 340–362, 368–390, and 396–418; these read YKCE…QRRH, FVCP…QIIH, FTCS…ERIH, and YTCP…MRTH.

The protein localises to the nucleus. The protein resides in the chromosome. It is found in the telomere. In terms of biological role, embryonic stem (ES) cell-specific transcription factor required to regulate ES cell pluripotency. Binds telomeres and plays a key role in genomic stability in ES cells by regulating telomere elongation. Acts as an activator of spontaneous telomere sister chromatid exchange (T-SCE) and telomere elongation in undifferentiated ES cells. The protein is Zinc finger and SCAN domain-containing protein 4 (ZSCAN4) of Homo sapiens (Human).